We begin with the raw amino-acid sequence, 1014 residues long: Collagen alpha-1(I) chain (1014 aa).

Residues 1 to 1014 (SYGYDEKGGI…PGPPGPPGPP (1014 aa)) are disordered. Residues 9-22 (GISVPGPMGPSGPR) are compositionally biased toward low complexity. 11 positions are modified to 4-hydroxyproline: Pro-25, Pro-28, Pro-30, Pro-39, Pro-42, Pro-45, Pro-60, Pro-75, Pro-81, Pro-90, and Pro-96. Positions 33-51 (QGFQGPPGEPGEPGSSGPM) are enriched in low complexity. Positions 63–77 (NGDDGEAGKPGRPGE) are enriched in basic and acidic residues. Lys-99 is subject to 5-hydroxylysine; alternate. A glycan (O-linked (Gal...) hydroxylysine; alternate) is linked at Lys-99. Ser-105 carries the post-translational modification Phosphoserine. A compositionally biased stretch (low complexity) spans 113–129 (DAGPAGPKGEPGSPGEN). A 4-hydroxyproline mark is found at Pro-123, Pro-126, Pro-132, Pro-141, Pro-147, Pro-168, Pro-177, Pro-180, Pro-207, Pro-210, Pro-222, Pro-228, Pro-237, Pro-243, Pro-246, and Pro-261. Over residues 147–165 (PGASGPAGARGNDGATGAA) the composition is skewed to low complexity. Over residues 167–179 (PPGPTGPAGPPGF) the composition is skewed to pro residues. Positions 213–252 (AGAAGPAGNPGADGQPGAKGANGAPGIAGAPGFPGARGPS) are enriched in low complexity. At Lys-264 the chain carries 5-hydroxylysine. 8 positions are modified to 4-hydroxyproline: Pro-270, Pro-273, Pro-285, Pro-294, Pro-309, Pro-315, Pro-324, and Pro-330. Over residues 319 to 328 (GERGGPGSRG) the composition is skewed to gly residues. 5-hydroxylysine is present on Lys-339. 4-hydroxyproline occurs at positions 348, 357, 363, 369, 378, 381, 390, 399, 405, 417, 426, 435, 438, 456, 473, 479, 485, 491, 497, 503, 515, 524, 535, 548, 554, and 563. A compositionally biased stretch (low complexity) spans 372–398 (KGLTGSPGSPGPDGKTGPPGPAGQDGR). Positions 407 to 426 (ARGQAGVMGFPGPKGAAGEP) are enriched in low complexity. The span at 485 to 494 (PGEAGKPGEQ) shows a compositional bias: low complexity. 5-hydroxylysine is present on Lys-575. A 4-hydroxyproline mark is found at Pro-581, Pro-596, and Pro-602. The span at 608–622 (SGPSGPAGPTGARGA) shows a compositional bias: low complexity. The residue at position 611 (Ser-611) is a Phosphoserine. 4-hydroxyproline is present on residues Pro-623, Pro-629, Pro-632, Pro-641, Pro-647, Pro-674, and Pro-683. Over residues 635 to 665 (AGFAGPPGADGQPGAKGEPGDAGAKGDAGPS) the composition is skewed to low complexity. At Lys-686 the chain carries 5-hydroxylysine. Residues 691–707 (SAGPPGATGFPGAAGRV) show a composition bias toward low complexity. 4-hydroxyproline occurs at positions 695 and 701. Pro-709 carries the 3-hydroxyproline modification. 16 positions are modified to 4-hydroxyproline: Pro-710, Pro-719, Pro-722, Pro-743, Pro-752, Pro-760, Pro-769, Pro-787, Pro-796, Pro-799, Pro-805, Pro-820, Pro-826, Pro-832, Pro-841, and Pro-847. Low complexity predominate over residues 736 to 745 (ETGPAGRPGE). The span at 757 to 769 (KGSPGADGPAGAP) shows a compositional bias: low complexity. Residues 819–829 (PPGPVGPPGLA) show a composition bias toward pro residues. Position 856 is a 5-hydroxylysine (Lys-856). Residues 864 to 879 (PGPPGAPGAPGAPGPV) show a composition bias toward pro residues. Pro-867, Pro-870, and Pro-873 each carry 4-hydroxyproline. The span at 900 to 914 (AGPAGARGPAGPQGP) shows a compositional bias: low complexity. Residues 915–929 (RGDKGETGEQGDRGI) show a composition bias toward basic and acidic residues. Residue Lys-918 is modified to 5-hydroxylysine. Lys-930 bears the 5-hydroxylysine; alternate mark. Lys-930 is a glycosylation site (O-linked (Gal...) hydroxylysine; alternate). Pro-945, Pro-948, Pro-966, and Pro-981 each carry 4-hydroxyproline. Residues 948-981 (PGEQGPSGASGPAGPRGPPGSAGSPGKDGLNGLP) are compositionally biased toward low complexity. Residue Pro-986 is modified to 3-hydroxyproline. 4-hydroxyproline is present on Pro-987. Positions 999-1014 (VGPPGPPGPPGPPGPP) are enriched in pro residues. Pro-1001 is subject to 3-hydroxyproline. Pro-1002 carries the 4-hydroxyproline modification. Pro-1004 carries the post-translational modification 3-hydroxyproline. Pro-1005 carries the post-translational modification 4-hydroxyproline. At Pro-1007 the chain carries 3-hydroxyproline. A 4-hydroxyproline mark is found at Pro-1008, Pro-1011, and Pro-1014.

It belongs to the fibrillar collagen family. In terms of assembly, trimers of one alpha 2(I) and two alpha 1(I) chains. Contains mostly 4-hydroxyproline. Proline residues at the third position of the tripeptide repeating unit (G-X-Y) are hydroxylated in some or all of the chains. In terms of processing, contains 3-hydroxyproline at a few sites. This modification occurs on the first proline residue in the sequence motif Gly-Pro-Hyp, where Hyp is 4-hydroxyproline. Post-translationally, lysine residues at the third position of the tripeptide repeating unit (G-X-Y) are 5-hydroxylated in some or all of the chains. O-glycosylated on hydroxylated lysine residues. The O-linked glycan consists of a Glc-Gal disaccharide. As to expression, expressed in bones.

Its subcellular location is the secreted. It localises to the extracellular space. The protein localises to the extracellular matrix. Its function is as follows. Type I collagen is a member of group I collagen (fibrillar forming collagen). This is Collagen alpha-1(I) chain from Megatherium americanum (Giant ground sloth).